Here is a 574-residue protein sequence, read N- to C-terminus: Polyamine aminopropyltransferase (574 aa).

7 helical membrane passes run 22–42 (VLLL…EYLL), 55–75 (AAIY…AFAA), 90–110 (LTVA…IGFG), 144–164 (LPYF…PLIA), 188–208 (IGAG…DIQL), 209–229 (AAAL…WRFW), and 237–257 (LLLA…IQGP). The interval 254–510 (IQGPSWEQQF…ATLDGKDAQH (257 aa)) is spermidine synthase. The PABS domain maps to 257-505 (PSWEQQFNNL…WGWSIATLDG (249 aa)). Position 281 (Gln-281) interacts with S-methyl-5'-thioadenosine. His-317 and Asp-341 together coordinate spermidine. Residues Asp-360 and 403 to 404 (DA) contribute to the S-methyl-5'-thioadenosine site. Asp-424 (proton acceptor) is an active-site residue.

Belongs to the spermidine/spermine synthase family. In terms of assembly, homodimer or homotetramer.

The protein resides in the cell membrane. The enzyme catalyses S-adenosyl 3-(methylsulfanyl)propylamine + putrescine = S-methyl-5'-thioadenosine + spermidine + H(+). The protein operates within amine and polyamine biosynthesis; spermidine biosynthesis; spermidine from putrescine: step 1/1. Its function is as follows. Catalyzes the irreversible transfer of a propylamine group from the amino donor S-adenosylmethioninamine (decarboxy-AdoMet) to putrescine (1,4-diaminobutane) to yield spermidine. The chain is Polyamine aminopropyltransferase from Shewanella oneidensis (strain ATCC 700550 / JCM 31522 / CIP 106686 / LMG 19005 / NCIMB 14063 / MR-1).